Consider the following 209-residue polypeptide: Thymidine kinase (209 aa).

ATP contacts are provided by residues 9–16 (SAMNAGKT) and 88–91 (DEAQ). Glu89 (proton acceptor) is an active-site residue.

This sequence belongs to the thymidine kinase family. As to quaternary structure, homotetramer.

It localises to the cytoplasm. The enzyme catalyses thymidine + ATP = dTMP + ADP + H(+). The sequence is that of Thymidine kinase from Xanthomonas campestris pv. campestris (strain 8004).